The chain runs to 157 residues: Baculoviral IAP repeat-containing protein 5.2-A (157 aa).

One copy of the BIR repeat lies at 31–101 (RLRTFSNWPF…KHSPSCLFIA (71 aa)). Residue T47 is modified to Phosphothreonine; by CDK1. Positions 70, 73, 90, and 97 each coordinate Zn(2+).

Belongs to the IAP family. As to quaternary structure, component of the CPC at least composed of survivin/birc5, incenp, cdca8/borealin and/or cdca9/dasra-A, and aurkb/aurora-B. Interacts directly with incenp (via N-terminus). Interacts with rxra; the interaction is stronger in the absence of 9-cis retinoic acids. Ubiquitination is required for centrosome-targeting. As to expression, highly expressed in vascular endothelial cells of tadpoles.

It is found in the cytoplasm. The protein resides in the nucleus. The protein localises to the chromosome. It localises to the centromere. Its subcellular location is the cytoskeleton. It is found in the spindle. Its function is as follows. Component of the chromosomal passenger complex (CPC), a complex that acts as a key regulator of mitosis. The CPC complex has essential functions at the centromere in ensuring correct chromosome alignment and segregation and is required for chromatin-induced microtubule stabilization and spindle assembly. Does not appear to exhibit anti-apoptotic activity. Plays a role in increasing blood vessel size during development. In Xenopus laevis (African clawed frog), this protein is Baculoviral IAP repeat-containing protein 5.2-A (birc5.2-a).